The following is a 196-amino-acid chain: Dephospho-CoA kinase (196 aa).

The 192-residue stretch at 5 to 196 folds into the DPCK domain; sequence IIGLTGGIAT…QVDIALNFEL (192 aa). 13-18 contacts ATP; it reads ATGKTT.

It belongs to the CoaE family.

Its subcellular location is the cytoplasm. The enzyme catalyses 3'-dephospho-CoA + ATP = ADP + CoA + H(+). The protein operates within cofactor biosynthesis; coenzyme A biosynthesis; CoA from (R)-pantothenate: step 5/5. In terms of biological role, catalyzes the phosphorylation of the 3'-hydroxyl group of dephosphocoenzyme A to form coenzyme A. This chain is Dephospho-CoA kinase, found in Nostoc sp. (strain PCC 7120 / SAG 25.82 / UTEX 2576).